The primary structure comprises 223 residues: Lipoprotein-releasing system ATP-binding protein LolD (223 aa).

One can recognise an ABC transporter domain in the interval 1–223 (MAKVFRSGST…DEVEPQSLPA (223 aa)). Position 32–39 (32–39 (GDSGSGKS)) interacts with ATP.

Belongs to the ABC transporter superfamily. Lipoprotein translocase (TC 3.A.1.125) family. In terms of assembly, the complex is composed of two ATP-binding proteins (LolD) and two transmembrane proteins (LolC and LolE).

It localises to the cell inner membrane. Its function is as follows. Part of the ABC transporter complex LolCDE involved in the translocation of mature outer membrane-directed lipoproteins, from the inner membrane to the periplasmic chaperone, LolA. Responsible for the formation of the LolA-lipoprotein complex in an ATP-dependent manner. This chain is Lipoprotein-releasing system ATP-binding protein LolD, found in Koribacter versatilis (strain Ellin345).